We begin with the raw amino-acid sequence, 210 residues long: Signal peptidase complex catalytic subunit SEC11 (210 aa).

Topologically, residues 1 to 21 (MLAGLSPHLSNLRRSLTQVLN) are cytoplasmic. The helical; Signal-anchor for type II membrane protein transmembrane segment at 22-38 (FALVLSTAFMMWKGLSI) threads the bilayer. The Lumenal portion of the chain corresponds to 39-210 (YTNSSSPIVV…MGAMVILQRE (172 aa)). N-linked (GlcNAc...) asparagine glycosylation occurs at N41. Residues S53, H92, and D152 each act as charge relay system in the active site. The segment at 196–207 (VLLGIMGAMVIL) is C-terminal short (CTS) helix.

Belongs to the peptidase S26B family. As to quaternary structure, component of the signal peptidase complex (SPC) composed of a catalytic subunit SEC11 and three accessory subunits SPC1, SPC2 and SPC3. The complex induces a local thinning of the ER membrane which is used to measure the length of the signal peptide (SP) h-region of protein substrates. This ensures the selectivity of the complex towards h-regions shorter than 18-20 amino acids. SPC associates with the translocon complex.

The protein resides in the endoplasmic reticulum membrane. The enzyme catalyses Cleavage of hydrophobic, N-terminal signal or leader sequences from secreted and periplasmic proteins.. Functionally, catalytic component of the signal peptidase complex (SPC) which catalyzes the cleavage of N-terminal signal sequences from nascent proteins as they are translocated into the lumen of the endoplasmic reticulum. Specifically cleaves N-terminal signal peptides that contain a hydrophobic alpha-helix (h-region) shorter than 18-20 amino acids. In Coccidioides posadasii (strain RMSCC 757 / Silveira) (Valley fever fungus), this protein is Signal peptidase complex catalytic subunit SEC11 (SEC11).